The chain runs to 118 residues: Large ribosomal subunit protein uL18 (118 aa).

The tract at residues 1–24 (MISKPDKNKIRQKRHRRVRGKLSG) is disordered. Basic residues predominate over residues 10–20 (IRQKRHRRVRG).

The protein belongs to the universal ribosomal protein uL18 family. In terms of assembly, part of the 50S ribosomal subunit; part of the 5S rRNA/L5/L18/L25 subcomplex. Contacts the 5S and 23S rRNAs.

In terms of biological role, this is one of the proteins that bind and probably mediate the attachment of the 5S RNA into the large ribosomal subunit, where it forms part of the central protuberance. This chain is Large ribosomal subunit protein uL18, found in Streptococcus agalactiae serotype III (strain NEM316).